The chain runs to 957 residues: Glycine dehydrogenase (decarboxylating) (957 aa).

Lys708 is modified (N6-(pyridoxal phosphate)lysine).

This sequence belongs to the GcvP family. In terms of assembly, the glycine cleavage system is composed of four proteins: P, T, L and H. It depends on pyridoxal 5'-phosphate as a cofactor.

It carries out the reaction N(6)-[(R)-lipoyl]-L-lysyl-[glycine-cleavage complex H protein] + glycine + H(+) = N(6)-[(R)-S(8)-aminomethyldihydrolipoyl]-L-lysyl-[glycine-cleavage complex H protein] + CO2. The glycine cleavage system catalyzes the degradation of glycine. The P protein binds the alpha-amino group of glycine through its pyridoxal phosphate cofactor; CO(2) is released and the remaining methylamine moiety is then transferred to the lipoamide cofactor of the H protein. The polypeptide is Glycine dehydrogenase (decarboxylating) (Shigella boydii serotype 18 (strain CDC 3083-94 / BS512)).